Here is a 430-residue protein sequence, read N- to C-terminus: UDP-N-acetylglucosamine 1-carboxyvinyltransferase (430 aa).

Lys22 to Asn23 serves as a coordination point for phosphoenolpyruvate. UDP-N-acetyl-alpha-D-glucosamine is bound at residue Arg102. Cys126 functions as the Proton donor in the catalytic mechanism. A 2-(S-cysteinyl)pyruvic acid O-phosphothioketal modification is found at Cys126. Residues Arg131–Leu135, Lys172–Val175, Asp317, and Ile339 each bind UDP-N-acetyl-alpha-D-glucosamine.

It belongs to the EPSP synthase family. MurA subfamily.

The protein localises to the cytoplasm. It catalyses the reaction phosphoenolpyruvate + UDP-N-acetyl-alpha-D-glucosamine = UDP-N-acetyl-3-O-(1-carboxyvinyl)-alpha-D-glucosamine + phosphate. The protein operates within cell wall biogenesis; peptidoglycan biosynthesis. Its function is as follows. Cell wall formation. Adds enolpyruvyl to UDP-N-acetylglucosamine. The protein is UDP-N-acetylglucosamine 1-carboxyvinyltransferase of Sinorhizobium fredii (strain NBRC 101917 / NGR234).